Here is a 249-residue protein sequence, read N- to C-terminus: Phosphate import ATP-binding protein PstB (249 aa).

In terms of domain architecture, ABC transporter spans 4–244 (IQTKDLNLYY…PKDKRTEDYI (241 aa)). Residue 36–43 (GPSGCGKS) coordinates ATP.

Belongs to the ABC transporter superfamily. Phosphate importer (TC 3.A.1.7) family. As to quaternary structure, the complex is composed of two ATP-binding proteins (PstB), two transmembrane proteins (PstC and PstA) and a solute-binding protein (PstS).

The protein resides in the cell membrane. It catalyses the reaction phosphate(out) + ATP + H2O = ADP + 2 phosphate(in) + H(+). Part of the ABC transporter complex PstSACB involved in phosphate import. Responsible for energy coupling to the transport system. This Clostridium acetobutylicum (strain ATCC 824 / DSM 792 / JCM 1419 / IAM 19013 / LMG 5710 / NBRC 13948 / NRRL B-527 / VKM B-1787 / 2291 / W) protein is Phosphate import ATP-binding protein PstB.